A 1124-amino-acid polypeptide reads, in one-letter code: Eukaryotic translation initiation factor 3 subunit A (1124 aa).

Positions 96–124 (LKMAEERTEQAQQQSSQATVDIDDLDNLA) form a coiled coil. The region spanning 317 to 498 (IQRMTTHVLI…ECVHFGTDLS (182 aa)) is the PCI domain. Composition is skewed to basic and acidic residues over residues 812–851 (EERRRIEEELRKQKEEADRIERERRAEERRIQDEKNRQLA) and 860–883 (EVERRRREELEQMKEADGRRERRP). Positions 812–1124 (EERRRIEEEL…EEGWTDVKHR (313 aa)) are disordered. Residues 900-910 (PAAAAPANPAA) show a composition bias toward low complexity. 4 stretches are compositionally biased toward basic and acidic residues: residues 928–952 (PRERGGETGPKDKWRTGPEDHEKDG), 960–990 (RGGDMRRGQDDRGPIRRGGGEERGEREDRGP), 1007–1048 (PRRD…RGGG), and 1063–1100 (DDNRRGPRDEGRQDTWRNTRQDAAPKQKEDRPQREARP).

The protein belongs to the eIF-3 subunit A family. In terms of assembly, component of the eukaryotic translation initiation factor 3 (eIF-3) complex.

It localises to the cytoplasm. In terms of biological role, RNA-binding component of the eukaryotic translation initiation factor 3 (eIF-3) complex, which is involved in protein synthesis of a specialized repertoire of mRNAs and, together with other initiation factors, stimulates binding of mRNA and methionyl-tRNAi to the 40S ribosome. The eIF-3 complex specifically targets and initiates translation of a subset of mRNAs involved in cell proliferation. This chain is Eukaryotic translation initiation factor 3 subunit A, found in Anopheles gambiae (African malaria mosquito).